The sequence spans 794 residues: K(+)-insensitive pyrophosphate-energized proton pump (794 aa).

A run of 5 helical transmembrane segments spans residues 20–40, 74–94, 102–122, 163–183, and 194–214; these read ALVA…GVLV, TLGV…ADDW, IFFL…MWLA, GVVG…VVLV, and GFGL…GIFT. Residue Lys215 coordinates substrate. Mg(2+) contacts are provided by Asp218, Asp222, Asn245, and Asp248. 6 helical membrane passes run 264-284, 285-305, 321-341, 365-385, 422-442, and 446-466; these read YAVT…DFGL, AFPL…IFAV, GFFI…FVYL, ILAL…QQLT, AVYT…LGGT, and LALF…GVIV. Asp476 lines the Mg(2+) pocket. 3 helical membrane passes run 508–528, 564–584, and 641–661; these read AITK…LFGS, VGLI…INAV, and IFIG…GAIG. Residues Asp678, Asp704, and Asp708 each coordinate Ca(2+). Lys711 contributes to the substrate binding site. A run of 2 helical transmembrane segments spans residues 717-737 and 747-767; these read AINP…PAVI and VVVR…AVYV.

Belongs to the H(+)-translocating pyrophosphatase (TC 3.A.10) family. K(+)-insensitive subfamily. In terms of assembly, homodimer. Mg(2+) is required as a cofactor.

The protein localises to the cell membrane. The catalysed reaction is diphosphate + H2O + H(+)(in) = 2 phosphate + 2 H(+)(out). Proton pump that utilizes the energy of pyrophosphate hydrolysis as the driving force for proton movement across the membrane. Generates a proton motive force. The polypeptide is K(+)-insensitive pyrophosphate-energized proton pump (Streptomyces coelicolor (strain ATCC BAA-471 / A3(2) / M145)).